The following is a 374-amino-acid chain: 4-hydroxy-3-methylbut-2-en-1-yl diphosphate synthase (flavodoxin) (374 aa).

Cys-272, Cys-275, Cys-307, and Glu-314 together coordinate [4Fe-4S] cluster.

The protein belongs to the IspG family. It depends on [4Fe-4S] cluster as a cofactor.

The enzyme catalyses (2E)-4-hydroxy-3-methylbut-2-enyl diphosphate + oxidized [flavodoxin] + H2O + 2 H(+) = 2-C-methyl-D-erythritol 2,4-cyclic diphosphate + reduced [flavodoxin]. The protein operates within isoprenoid biosynthesis; isopentenyl diphosphate biosynthesis via DXP pathway; isopentenyl diphosphate from 1-deoxy-D-xylulose 5-phosphate: step 5/6. Converts 2C-methyl-D-erythritol 2,4-cyclodiphosphate (ME-2,4cPP) into 1-hydroxy-2-methyl-2-(E)-butenyl 4-diphosphate. The sequence is that of 4-hydroxy-3-methylbut-2-en-1-yl diphosphate synthase (flavodoxin) from Acidiphilium cryptum (strain JF-5).